A 414-amino-acid polypeptide reads, in one-letter code: uncharacterized protein (414 aa).

The Lumenal segment spans residues 1-66 (MNPSVPKVMK…LQRISKDYLK (66 aa)). Residues 20–51 (SKEMNDTSLQLPSTTRSLSPKESNSNEDFNVD) form a disordered region. Residues 25–51 (DTSLQLPSTTRSLSPKESNSNEDFNVD) show a composition bias toward polar residues. Residue lysine 40 forms a Glycyl lysine isopeptide (Lys-Gly) (interchain with G-Cter in ubiquitin) linkage. The helical transmembrane segment at 67-87 (PNIGLVLLTVSYFFNSAMVVS) threads the bilayer. The EamA 1 domain maps to 78-215 (YFFNSAMVVS…SLLGVVLIVR (138 aa)). Residues 88–106 (TKVLENDPDDIANDRQIKP) lie on the Cytoplasmic side of the membrane. A helical membrane pass occupies residues 107-127 (LQILLVRMVITYIGTLIYMYI). Residues 128 to 144 (NKSTISDVPFGKPEVRK) lie on the Lumenal side of the membrane. A helical transmembrane segment spans residues 145 to 167 (WLVLRGCTGFFGVFGMYYSLMYL). The Cytoplasmic segment spans residues 168-171 (TISD). A helical membrane pass occupies residues 172-191 (AVLITFLAPSLTIFLSWVIL). Residues 192–199 (RERFTKVE) lie on the Lumenal side of the membrane. Residues 200-220 (ALGSLISLLGVVLIVRPSFLF) form a helical membrane-spanning segment. The Cytoplasmic portion of the chain corresponds to 221–241 (GTPELTDSSSQIVESSDPKSR). The helical transmembrane segment at 242-262 (LIATLVGLWGVLGMSCVYIII) threads the bilayer. The region spanning 253-379 (LGMSCVYIII…IISATLWVIR (127 aa)) is the EamA 2 domain. Residues 263-269 (RYIGKRA) lie on the Lumenal side of the membrane. Residues 270–290 (HAIMSVSYFSLITAIVSFIGI) traverse the membrane as a helical segment. At 291-307 (NTIPSMKFQIPHSKKQW) the chain is on the cytoplasmic side. Residues 308–328 (ILFGNLGVSGFIFQLLLTMGI) form a helical membrane-spanning segment. At 329–357 (QRERAGRGSLMTYTQLLYAVFWDVALYKH) the chain is on the lumenal side. Residues 358–378 (WPNIWSWIGMIIIISATLWVI) traverse the membrane as a helical segment. Residues 379–414 (RIRAANNETTAKDLTPIIDDEENSIPLTEFDLSDSK) lie on the Cytoplasmic side of the membrane.

This sequence to yeast YPL264c.

It localises to the membrane. This is an uncharacterized protein from Saccharomyces cerevisiae (strain ATCC 204508 / S288c) (Baker's yeast).